Consider the following 149-residue polypeptide: Arginine repressor (149 aa).

This sequence belongs to the ArgR family.

It is found in the cytoplasm. Its pathway is amino-acid biosynthesis; L-arginine biosynthesis [regulation]. In terms of biological role, regulates arginine biosynthesis genes. The sequence is that of Arginine repressor from Geobacillus kaustophilus (strain HTA426).